Here is a 327-residue protein sequence, read N- to C-terminus: Methionyl-tRNA formyltransferase (327 aa).

121 to 124 (SLLP) contacts (6S)-5,6,7,8-tetrahydrofolate.

Belongs to the Fmt family.

The catalysed reaction is L-methionyl-tRNA(fMet) + (6R)-10-formyltetrahydrofolate = N-formyl-L-methionyl-tRNA(fMet) + (6S)-5,6,7,8-tetrahydrofolate + H(+). Attaches a formyl group to the free amino group of methionyl-tRNA(fMet). The formyl group appears to play a dual role in the initiator identity of N-formylmethionyl-tRNA by promoting its recognition by IF2 and preventing the misappropriation of this tRNA by the elongation apparatus. The chain is Methionyl-tRNA formyltransferase from Paraburkholderia phymatum (strain DSM 17167 / CIP 108236 / LMG 21445 / STM815) (Burkholderia phymatum).